We begin with the raw amino-acid sequence, 410 residues long: S-adenosylmethionine synthase (410 aa).

His-15 is an ATP binding site. Asp-17 is a binding site for Mg(2+). Glu-43 contacts K(+). L-methionine-binding residues include Glu-56 and Gln-100. The interval 100 to 110 (QSPDIAKGVDT) is flexible loop. ATP contacts are provided by residues 171–173 (DGK), 248–249 (KF), Asp-257, 263–264 (RK), Ala-280, and Lys-284. Asp-257 contacts L-methionine. Residue Lys-288 participates in L-methionine binding.

The protein belongs to the AdoMet synthase family. In terms of assembly, homotetramer; dimer of dimers. The cofactor is Mg(2+). K(+) serves as cofactor.

It is found in the cytoplasm. The enzyme catalyses L-methionine + ATP + H2O = S-adenosyl-L-methionine + phosphate + diphosphate. It participates in amino-acid biosynthesis; S-adenosyl-L-methionine biosynthesis; S-adenosyl-L-methionine from L-methionine: step 1/1. Catalyzes the formation of S-adenosylmethionine (AdoMet) from methionine and ATP. The overall synthetic reaction is composed of two sequential steps, AdoMet formation and the subsequent tripolyphosphate hydrolysis which occurs prior to release of AdoMet from the enzyme. The polypeptide is S-adenosylmethionine synthase (Prochlorococcus marinus (strain MIT 9211)).